The sequence spans 179 residues: NAD(P)H-quinone oxidoreductase subunit I, chloroplastic (179 aa).

4Fe-4S ferredoxin-type domains follow at residues 55–84 (GRIHFEFDKCIACEVCVRVCPIDLPVVDWR) and 95–124 (LNYSIDFGICIFCGNCVEYCPTNCLSMTEE). [4Fe-4S] cluster contacts are provided by Cys-64, Cys-67, Cys-70, Cys-74, Cys-104, Cys-107, Cys-110, and Cys-114.

It belongs to the complex I 23 kDa subunit family. NDH is composed of at least 16 different subunits, 5 of which are encoded in the nucleus. It depends on [4Fe-4S] cluster as a cofactor.

Its subcellular location is the plastid. The protein resides in the chloroplast thylakoid membrane. It catalyses the reaction a plastoquinone + NADH + (n+1) H(+)(in) = a plastoquinol + NAD(+) + n H(+)(out). The enzyme catalyses a plastoquinone + NADPH + (n+1) H(+)(in) = a plastoquinol + NADP(+) + n H(+)(out). NDH shuttles electrons from NAD(P)H:plastoquinone, via FMN and iron-sulfur (Fe-S) centers, to quinones in the photosynthetic chain and possibly in a chloroplast respiratory chain. The immediate electron acceptor for the enzyme in this species is believed to be plastoquinone. Couples the redox reaction to proton translocation, and thus conserves the redox energy in a proton gradient. The protein is NAD(P)H-quinone oxidoreductase subunit I, chloroplastic of Nymphaea alba (White water-lily).